The following is a 126-amino-acid chain: Nuclear transport factor 2B (126 aa).

N-acetylserine is present on serine 2. One can recognise an NTF2 domain in the interval valine 9–leucine 123.

In terms of assembly, interacts with RAN1. As to expression, expressed in roots, stems, leaves and flowers, and, at low levels, in siliques.

It localises to the cytoplasm. The protein localises to the nucleus. The protein resides in the nucleus envelope. Its function is as follows. Facilitates protein transport into the nucleus. Interacts with various nucleoporins and with Ran-GDP. Could be part of a multicomponent system of cytosolic factors that assemble at the pore complex during nuclear import. The polypeptide is Nuclear transport factor 2B (Arabidopsis thaliana (Mouse-ear cress)).